We begin with the raw amino-acid sequence, 102 residues long: Putative toxin YafQ (102 aa).

Belongs to the RelE toxin family. YafQ subfamily.

Functionally, toxic component of a type II toxin-antitoxin (TA) system. Its cognate antitoxin is RelB. The protein is Putative toxin YafQ of Haemophilus influenzae (strain ATCC 51907 / DSM 11121 / KW20 / Rd).